Consider the following 1792-residue polypeptide: D-lysergyl-peptide-synthetase subunit 3 (1792 aa).

An adenylation (A) domain region spans residues 239–642 (FRQRCDLHPN…GRKDSQIKIR (404 aa)). The Carrier domain occupies 779–853 (SNEEHRLQRM…DLARKASQSV (75 aa)). An O-(pantetheine 4'-phosphoryl)serine modification is found at serine 813. A condensation (C) domain region spans residues 895 to 1285 (EDIYPCTPMQ…HILGQIHGKE (391 aa)). Positions 1415 to 1640 (VTGANGFIGT…AGEFNSSAGS (226 aa)) are reductase (R) domain.

The protein belongs to the NRP synthetase family.

Its pathway is alkaloid biosynthesis; ergot alkaloid biosynthesis. In terms of biological role, D-lysergyl-peptide-synthetase subunit 3; part of the gene cluster that mediates the biosynthesis of fungal ergot alkaloid. DmaW catalyzes the first step of ergot alkaloid biosynthesis by condensing dimethylallyl diphosphate (DMAP) and tryptophan to form 4-dimethylallyl-L-tryptophan. The second step is catalyzed by the methyltransferase easF that methylates 4-dimethylallyl-L-tryptophan in the presence of S-adenosyl-L-methionine, resulting in the formation of 4-dimethylallyl-L-abrine. The catalase easC and the FAD-dependent oxidoreductase easE then transform 4-dimethylallyl-L-abrine to chanoclavine-I which is further oxidized by easD in the presence of NAD(+), resulting in the formation of chanoclavine-I aldehyde. Agroclavine dehydrogenase easG then mediates the conversion of chanoclavine-I aldehyde to agroclavine via a non-enzymatic adduct reaction: the substrate is an iminium intermediate that is formed spontaneously from chanoclavine-I aldehyde in the presence of glutathione. The presence of easA is not required to complete this reaction. Further conversion of agroclavine to paspalic acid is a two-step process involving oxidation of agroclavine to elymoclavine and of elymoclavine to paspalic acid, the second step being performed by the elymoclavine oxidase cloA. Paspalic acid is then further converted to D-lysergic acid. Ergopeptines are assembled from D-lysergic acid and three different amino acids by the D-lysergyl-peptide-synthetases composed each of a monomudular and a trimodular nonribosomal peptide synthetase subunit. LpsB and lpsC encode the monomodular subunits responsible for D-lysergic acid activation and incorporation into the ergopeptine backbone. LpsA1 and A2 subunits encode the trimodular nonribosomal peptide synthetase assembling the tripeptide portion of ergopeptines. LpsA1 is responsible for formation of the major ergopeptine, ergotamine, and lpsA2 for alpha-ergocryptine, the minor ergopeptine of the total alkaloid mixture elaborated by C.purpurea. D-lysergyl-tripeptides are assembled by the nonribosomal peptide synthetases and released as N-(D-lysergyl-aminoacyl)-lactams. Cyclolization of the D-lysergyl-tripeptides is performed by the Fe(2+)/2-ketoglutarate-dependent dioxygenase easH which introduces a hydroxyl group into N-(D-lysergyl-aminoacyl)-lactam at alpha-C of the aminoacyl residue followed by spontaneous condensation with the terminal lactam carbonyl group. This chain is D-lysergyl-peptide-synthetase subunit 3, found in Claviceps purpurea (strain 20.1) (Ergot fungus).